A 497-amino-acid chain; its full sequence is 5'-AMP-activated protein kinase subunit gamma-3 (497 aa).

The disordered stretch occupies residues 16–143 (STQTPSWSSF…SSSSTDDLDQ (128 aa)). Positions 39-54 (GDSTSWPSPAMTTSAE) are enriched in polar residues. Positions 68 to 79 (KSQEDVEERELP) are enriched in basic and acidic residues. CBS domains are found at residues 204–265 (MATS…RSPL), 287–345 (CFKP…QRTL), and 363–423 (TFRD…HLDI). ADP is bound by residues Arg232, 247–252 (MLTITD), Val292, 313–314 (HR), and Lys332. AMP contacts are provided by residues Arg232, 247–252 (MLTITD), Val292, His313, 313–314 (HR), Lys332, Thr363, Ala368, 389–390 (SA), 405–408 (SRFD), Arg432, Leu440, His461, 461–462 (HR), and 477–480 (SLSD). ATP-binding positions include Arg232, 247–252 (MLTITD), Val292, 313–314 (HR), Arg314, and Lys332. An AMPK pseudosubstrate motif is present at residues 300–321 (LFEAVYTLIKNRIHRLPVLDPV). ADP is bound by residues 405–408 (SRFD), Arg432, Leu440, and 461–462 (HR). Residues 405 to 408 (SRFD), Arg432, Leu440, and 461 to 462 (HR) each bind ATP. A CBS 4 domain is found at 435–494 (CLEGVLSCQPHETLGEVIDRIAREQVHRLVLVDETQHLLGVVSLSDILQALVLSPAGIDA).

It belongs to the 5'-AMP-activated protein kinase gamma subunit family. As to quaternary structure, AMPK is a heterotrimer of an alpha catalytic subunit (PRKAA1 or PRKAA2), a beta (PRKAB1 or PRKAB2) and a gamma non-catalytic subunits (PRKAG1, PRKAG2 or PRKAG3). Interacts with FNIP1 and FNIP2. Post-translationally, phosphorylated by ULK1; leading to negatively regulate AMPK activity and suggesting the existence of a regulatory feedback loop between ULK1 and AMPK. In terms of processing, glycosylated; O-GlcNAcylated by OGT, promoting the AMP-activated protein kinase (AMPK) activity.

In terms of biological role, AMP/ATP-binding subunit of AMP-activated protein kinase (AMPK), an energy sensor protein kinase that plays a key role in regulating cellular energy metabolism. In response to reduction of intracellular ATP levels, AMPK activates energy-producing pathways and inhibits energy-consuming processes: inhibits protein, carbohydrate and lipid biosynthesis, as well as cell growth and proliferation. AMPK acts via direct phosphorylation of metabolic enzymes, and by longer-term effects via phosphorylation of transcription regulators. AMPK also acts as a regulator of cellular polarity by remodeling the actin cytoskeleton; probably by indirectly activating myosin. The AMPK gamma3 subunit is a non-catalytic subunit with a regulatory role in muscle energy metabolism. It mediates binding to AMP, ADP and ATP, leading to AMPK activation or inhibition: AMP-binding results in allosteric activation of alpha catalytic subunit (PRKAA1 or PRKAA2) both by inducing phosphorylation and preventing dephosphorylation of catalytic subunits. ADP also stimulates phosphorylation, without stimulating already phosphorylated catalytic subunit. ATP promotes dephosphorylation of catalytic subunit, rendering the AMPK enzyme inactive. This chain is 5'-AMP-activated protein kinase subunit gamma-3 (PRKAG3), found in Bos taurus (Bovine).